The following is a 380-amino-acid chain: Probable pectin lyase A (380 aa).

An N-terminal signal peptide occupies residues 1–20 (MRYTSLFTAVTAALASTAAA). 2 disulfide bridges follow: Cys-83-Cys-102 and Cys-92-Cys-226. An N-linked (GlcNAc...) asparagine glycan is attached at Asn-129. The active site involves Arg-256. Cysteines 323 and 331 form a disulfide.

Belongs to the polysaccharide lyase 1 family.

It is found in the secreted. It carries out the reaction Eliminative cleavage of (1-&gt;4)-alpha-D-galacturonan methyl ester to give oligosaccharides with 4-deoxy-6-O-methyl-alpha-D-galact-4-enuronosyl groups at their non-reducing ends.. Its function is as follows. Pectinolytic enzymes consist of four classes of enzymes: pectin lyase, polygalacturonase, pectin methylesterase and rhamnogalacturonase. Among pectinolytic enzymes, pectin lyase is the most important in depolymerization of pectin, since it cleaves internal glycosidic bonds of highly methylated pectins. The protein is Probable pectin lyase A (pelA) of Aspergillus fumigatus (strain ATCC MYA-4609 / CBS 101355 / FGSC A1100 / Af293) (Neosartorya fumigata).